The chain runs to 481 residues: Protein nucleotidyltransferase YdiU (481 aa).

ATP is bound by residues G85, G87, R88, K108, D120, G121, R172, and R179. The active-site Proton acceptor is the D248. Mg(2+) contacts are provided by N249 and D258. D258 is a binding site for ATP.

The protein belongs to the SELO family. It depends on Mg(2+) as a cofactor. Mn(2+) is required as a cofactor.

The catalysed reaction is L-seryl-[protein] + ATP = 3-O-(5'-adenylyl)-L-seryl-[protein] + diphosphate. It carries out the reaction L-threonyl-[protein] + ATP = 3-O-(5'-adenylyl)-L-threonyl-[protein] + diphosphate. The enzyme catalyses L-tyrosyl-[protein] + ATP = O-(5'-adenylyl)-L-tyrosyl-[protein] + diphosphate. It catalyses the reaction L-histidyl-[protein] + UTP = N(tele)-(5'-uridylyl)-L-histidyl-[protein] + diphosphate. The catalysed reaction is L-seryl-[protein] + UTP = O-(5'-uridylyl)-L-seryl-[protein] + diphosphate. It carries out the reaction L-tyrosyl-[protein] + UTP = O-(5'-uridylyl)-L-tyrosyl-[protein] + diphosphate. Its function is as follows. Nucleotidyltransferase involved in the post-translational modification of proteins. It can catalyze the addition of adenosine monophosphate (AMP) or uridine monophosphate (UMP) to a protein, resulting in modifications known as AMPylation and UMPylation. The polypeptide is Protein nucleotidyltransferase YdiU (Cereibacter sphaeroides (strain ATCC 17029 / ATH 2.4.9) (Rhodobacter sphaeroides)).